Consider the following 512-residue polypeptide: MKLKPIEVAEILQKEIANINCLSELEEVGQVITVGDGIAKIYGLANVKSGEVVEFKSGVKGLVLNLENDSVSAVIMGDDNQVQQGDNVKRIKEVLAVPVGKALLGRVVDVFGNPIDGKGDIASKEYRNIEVKAPGIIERASVSEPVQTGIKAIDSLIPIGRGQRELIIGDRQTGKTAIAVDTIINQKQAHLLTNEHDKIYCIYVAIGQKRSSVAQIVRKLEAAGAMGYTIVIAATASEAAALQFIAPYSACSMGEYFRDNGMHALIIYDDLSKHAVAYRQISLLLRRPPGREAYPGDIFFLHSRLLERAAKMSDAKGSGSLTALPIIETQAGDVSAYIPTNVISITDGQIFLESELFYKGIRPAVNVGISVSRVGSAAQIKAMKQVAGSVKLELAQFRELESFSQFESDLDPTTKAQIDHGKRLVEILKQAQYHPFPVEEQIVSIYVGTKKYLHDVPLQKVKEFEDKMLTEIRLNKNDILESIKNEKRITEETEQKLKTFLENFVKAFIKAS.

ATP is bound at residue 169 to 176 (GDRQTGKT).

The protein belongs to the ATPase alpha/beta chains family. In terms of assembly, F-type ATPases have 2 components, CF(1) - the catalytic core - and CF(0) - the membrane proton channel. CF(1) has five subunits: alpha(3), beta(3), gamma(1), delta(1), epsilon(1). CF(0) has three main subunits: a(1), b(2) and c(9-12). The alpha and beta chains form an alternating ring which encloses part of the gamma chain. CF(1) is attached to CF(0) by a central stalk formed by the gamma and epsilon chains, while a peripheral stalk is formed by the delta and b chains.

The protein resides in the cell inner membrane. It catalyses the reaction ATP + H2O + 4 H(+)(in) = ADP + phosphate + 5 H(+)(out). Its function is as follows. Produces ATP from ADP in the presence of a proton gradient across the membrane. The alpha chain is a regulatory subunit. The polypeptide is ATP synthase subunit alpha (Rickettsia canadensis (strain McKiel)).